The following is a 455-amino-acid chain: Hydroxymethylglutaryl-CoA synthase 2 (455 aa).

Residue E86 is the Proton donor/acceptor of the active site. C120 (acyl-thioester intermediate) is an active-site residue. (3S)-3-hydroxy-3-methylglutaryl-CoA-binding residues include C120, T161, S211, H255, K264, N329, and S363. The active-site Proton donor/acceptor is the H255.

It belongs to the thiolase-like superfamily. HMG-CoA synthase family.

It carries out the reaction acetoacetyl-CoA + acetyl-CoA + H2O = (3S)-3-hydroxy-3-methylglutaryl-CoA + CoA + H(+). It participates in metabolic intermediate biosynthesis; (R)-mevalonate biosynthesis; (R)-mevalonate from acetyl-CoA: step 2/3. This enzyme condenses acetyl-CoA with acetoacetyl-CoA to form HMG-CoA, which is the substrate for HMG-CoA reductase. This chain is Hydroxymethylglutaryl-CoA synthase 2 (HMGCS-2), found in Blattella germanica (German cockroach).